The primary structure comprises 160 residues: Transcription elongation factor GreA (160 aa).

Residues 1-72 adopt a coiled-coil conformation; it reads MAEKTYPMTQ…QIQILETKIR (72 aa).

It belongs to the GreA/GreB family.

Necessary for efficient RNA polymerase transcription elongation past template-encoded arresting sites. The arresting sites in DNA have the property of trapping a certain fraction of elongating RNA polymerases that pass through, resulting in locked ternary complexes. Cleavage of the nascent transcript by cleavage factors such as GreA or GreB allows the resumption of elongation from the new 3'terminus. GreA releases sequences of 2 to 3 nucleotides. In Streptococcus agalactiae serotype Ia (strain ATCC 27591 / A909 / CDC SS700), this protein is Transcription elongation factor GreA.